We begin with the raw amino-acid sequence, 398 residues long: Cathepsin D (398 aa).

A signal peptide spans 1 to 20 (MAPRGLLVLLLLALVGPCAA). Positions 21–63 (LIRIPLTKFTSTRRMLTEVGSEIPDMNAITQFLKFKLGFADLA) are cleaved as a propeptide — activation peptide. In terms of domain architecture, Peptidase A1 spans 78 to 395 (YYGEIGIGTP…DRDNDSVGFA (318 aa)). D96 is an active-site residue. Cysteines 109 and 116 form a disulfide. 2 N-linked (GlcNAc...) asparagine glycosylation sites follow: N133 and N251. C274 and C278 are disulfide-bonded. D283 is a catalytic residue. C317 and C354 are oxidised to a cystine.

The protein belongs to the peptidase A1 family. In terms of assembly, consists of a light chain and a heavy chain. As to expression, oocytic yolk, preovulatory follicles, liver.

The protein resides in the lysosome. It catalyses the reaction Specificity similar to, but narrower than, that of pepsin A. Does not cleave the 4-Gln-|-His-5 bond in B chain of insulin.. Acid protease active in intracellular protein breakdown. In chicken it is a key enzyme for yolk formation as it is capable of catalyzing intra oocytic break down of protein components of both vitellogenin and VLDL. In Gallus gallus (Chicken), this protein is Cathepsin D (CTSD).